A 245-amino-acid polypeptide reads, in one-letter code: DNA polymerase sliding clamp (245 aa).

The protein belongs to the PCNA family. In terms of assembly, homotrimer. The subunits circularize to form a toroid; DNA passes through its center. Replication factor C (RFC) is required to load the toroid on the DNA.

Functionally, sliding clamp subunit that acts as a moving platform for DNA processing. Responsible for tethering the catalytic subunit of DNA polymerase and other proteins to DNA during high-speed replication. The sequence is that of DNA polymerase sliding clamp from Methanosarcina acetivorans (strain ATCC 35395 / DSM 2834 / JCM 12185 / C2A).